A 246-amino-acid chain; its full sequence is Uridylate kinase (246 aa).

11-14 (KLSG) is an ATP binding site. Gly-53 contacts UMP. Residues Gly-54 and Arg-58 each coordinate ATP. Residues Asp-73 and 134-141 (TGNPYFTT) contribute to the UMP site. ATP is bound by residues Thr-161, Tyr-167, and Asp-170.

Belongs to the UMP kinase family. Homohexamer.

The protein localises to the cytoplasm. It carries out the reaction UMP + ATP = UDP + ADP. It functions in the pathway pyrimidine metabolism; CTP biosynthesis via de novo pathway; UDP from UMP (UMPK route): step 1/1. With respect to regulation, inhibited by UTP. In terms of biological role, catalyzes the reversible phosphorylation of UMP to UDP. The protein is Uridylate kinase of Leptospira borgpetersenii serovar Hardjo-bovis (strain JB197).